Here is a 293-residue protein sequence, read N- to C-terminus: Nucleotide-binding protein LBA0691 (293 aa).

An ATP-binding site is contributed by 13–20 (GMSGAGKT). 63 to 66 (DLRV) is a GTP binding site.

This sequence belongs to the RapZ-like family.

Displays ATPase and GTPase activities. In Lactobacillus acidophilus (strain ATCC 700396 / NCK56 / N2 / NCFM), this protein is Nucleotide-binding protein LBA0691.